The primary structure comprises 180 residues: Large ribosomal subunit protein uL5 (180 aa).

The protein belongs to the universal ribosomal protein uL5 family. In terms of assembly, part of the 50S ribosomal subunit; part of the 5S rRNA/L5/L18/L25 subcomplex. Contacts the 5S rRNA and the P site tRNA. Forms a bridge to the 30S subunit in the 70S ribosome.

Its function is as follows. This is one of the proteins that bind and probably mediate the attachment of the 5S RNA into the large ribosomal subunit, where it forms part of the central protuberance. In the 70S ribosome it contacts protein S13 of the 30S subunit (bridge B1b), connecting the 2 subunits; this bridge is implicated in subunit movement. Contacts the P site tRNA; the 5S rRNA and some of its associated proteins might help stabilize positioning of ribosome-bound tRNAs. In Clostridium botulinum (strain Loch Maree / Type A3), this protein is Large ribosomal subunit protein uL5.